The sequence spans 218 residues: Ribose-5-phosphate isomerase A (218 aa).

Substrate is bound by residues 28–31 (TGST), 81–84 (DGAD), and 94–97 (KGGG). The active-site Proton acceptor is the Glu103. A substrate-binding site is contributed by Lys121.

It belongs to the ribose 5-phosphate isomerase family. Homodimer.

It catalyses the reaction aldehydo-D-ribose 5-phosphate = D-ribulose 5-phosphate. Its pathway is carbohydrate degradation; pentose phosphate pathway; D-ribose 5-phosphate from D-ribulose 5-phosphate (non-oxidative stage): step 1/1. In terms of biological role, catalyzes the reversible conversion of ribose-5-phosphate to ribulose 5-phosphate. This chain is Ribose-5-phosphate isomerase A, found in Aliivibrio fischeri (strain ATCC 700601 / ES114) (Vibrio fischeri).